Consider the following 800-residue polypeptide: Fibroblast growth factor receptor 4 (800 aa).

The first 16 residues, 1 to 16, serve as a signal peptide directing secretion; that stretch reads MWLLLALLSIFQETPA. 3 consecutive Ig-like C2-type domains span residues 17 to 115, 148 to 236, and 245 to 345; these read FSLE…LIMD, PQRM…YLLD, and PILQ…AWLT. Topologically, residues 17-367 are extracellular; it reads FSLEASEEME…TATSEARYTD (351 aa). A disulfide bond links Cys-54 and Cys-98. N-linked (GlcNAc...) asparagine glycosylation is present at Asn-109. An intrachain disulfide couples Cys-168 to Cys-220. Asn-254, Asn-286, and Asn-307 each carry an N-linked (GlcNAc...) asparagine glycan. Cys-267 and Cys-329 form a disulfide bridge. The helical transmembrane segment at 368–388 threads the bilayer; the sequence is IILYVSGSLALVLLLLLAGVY. Over 389–800 the chain is Cytoplasmic; it reads HRQAIHGHHS…PFPFPEAQTT (412 aa). Residues 465-753 form the Protein kinase domain; it reads LVLGKPLGEG…VLLAVSEEYL (289 aa). Residues 471–479 and Lys-501 each bind ATP; that span reads LGEGCFGQV. Ser-571 is subject to Phosphoserine. Residue Asp-610 is the Proton acceptor of the active site. 3 positions are modified to phosphotyrosine; by autocatalysis: Tyr-640, Tyr-641, and Tyr-752. A disordered region spans residues 768–800; the sequence is DASSTCSSSDSVFSHDPLPLEPSPFPFPEAQTT. Residues 770–781 are compositionally biased toward low complexity; the sequence is SSTCSSSDSVFS.

This sequence belongs to the protein kinase superfamily. Tyr protein kinase family. Fibroblast growth factor receptor subfamily. In terms of assembly, monomer. Homodimer after ligand binding. Interacts with FGF1, FGF2, FGF4, FGF6, FGF8, FGF9, FGF16, FGF17, FGF18, FGF19, FGF21 and FGF23 (in vitro). Binding affinity for FGF family members is enhanced by interactions between FGFs and heparan sulfate proteoglycans. Interacts with KLB; this strongly increases the affinity for FGF19 and FGF23. Affinity for FGF19 is strongly increased by KLB and sulfated glycosaminoglycans. KLB and KL both interact with the core-glycosylated FGFR4 in the endoplasmic reticulum and promote its degradation, so that only FGFR4 with fully mature N-glycans is expressed at the cell surface. Identified in a complex with NCAM1, CDH2, PLCG1, FRS2, SRC, SHC1, GAP43 and CTTN. Interacts with MMP14 and HIP1. Interacts with STAT3. In terms of processing, N-glycosylated. Full maturation of the glycan chains in the Golgi is essential for high affinity interaction with FGF19. Ubiquitinated. Subject to proteasomal degradation when not fully glycosylated. Post-translationally, autophosphorylated. Binding of FGF family members together with heparan sulfate proteoglycan or heparin promotes receptor dimerization and autophosphorylation on tyrosine residues. Autophosphorylation occurs in trans between the two FGFR molecules present in the dimer.

It localises to the cell membrane. The protein resides in the endosome. Its subcellular location is the endoplasmic reticulum. The enzyme catalyses L-tyrosyl-[protein] + ATP = O-phospho-L-tyrosyl-[protein] + ADP + H(+). With respect to regulation, present in an inactive conformation in the absence of bound ligand. Ligand binding leads to dimerization and activation by autophosphorylation on tyrosine residues. In terms of biological role, tyrosine-protein kinase that acts as a cell-surface receptor for fibroblast growth factors and plays a role in the regulation of cell proliferation, differentiation and migration, and in regulation of lipid metabolism, bile acid biosynthesis, glucose uptake, vitamin D metabolism and phosphate homeostasis. Required for normal down-regulation of the expression of CYP7A1, the rate-limiting enzyme in bile acid synthesis, in response to FGF19. Phosphorylates PLCG1 and FRS2. Ligand binding leads to the activation of several signaling cascades. Activation of PLCG1 leads to the production of the cellular signaling molecules diacylglycerol and inositol 1,4,5-trisphosphate. Phosphorylation of FRS2 triggers recruitment of GRB2, GAB1, PIK3R1 and SOS1, and mediates activation of RAS, MAPK1/ERK2, MAPK3/ERK1 and the MAP kinase signaling pathway, as well as of the AKT1 signaling pathway. Promotes SRC-dependent phosphorylation of the matrix protease MMP14 and its lysosomal degradation. FGFR4 signaling is down-regulated by receptor internalization and degradation; MMP14 promotes internalization and degradation of FGFR4. This Rattus norvegicus (Rat) protein is Fibroblast growth factor receptor 4 (Fgfr4).